We begin with the raw amino-acid sequence, 285 residues long: Pantothenate synthetase (285 aa).

30-37 (MGNLHDGH) contributes to the ATP binding site. Catalysis depends on His-37, which acts as the Proton donor. Gln-61 is a binding site for (R)-pantoate. Gln-61 contributes to the beta-alanine binding site. Residue 149 to 152 (GEKD) participates in ATP binding. Gln-155 provides a ligand contact to (R)-pantoate. ATP contacts are provided by residues Ile-178 and 186-189 (LSSR).

Belongs to the pantothenate synthetase family. As to quaternary structure, homodimer.

The protein resides in the cytoplasm. It carries out the reaction (R)-pantoate + beta-alanine + ATP = (R)-pantothenate + AMP + diphosphate + H(+). Its pathway is cofactor biosynthesis; (R)-pantothenate biosynthesis; (R)-pantothenate from (R)-pantoate and beta-alanine: step 1/1. Its function is as follows. Catalyzes the condensation of pantoate with beta-alanine in an ATP-dependent reaction via a pantoyl-adenylate intermediate. The protein is Pantothenate synthetase of Buchnera aphidicola subsp. Acyrthosiphon pisum (strain Tuc7).